A 671-amino-acid chain; its full sequence is Transcriptional regulator Kaiso (671 aa).

An interaction with NCOR1 region spans residues 1–103 (MESRKLISAT…RADLLDELIK (103 aa)). The tract at residues 1–136 (MESRKLISAT…SGTEQDGTAE (136 aa)) is self-association. The BTB domain maps to 32–94 (CDVTVIVEDR…IYSSKVVRVR (63 aa)). Residues 127 to 144 (SGTEQDGTAETLPSSSSD) are compositionally biased toward polar residues. The disordered stretch occupies residues 127-161 (SGTEQDGTAETLPSSSSDKSLDMEKSKDEAQDNGA). Residues 145 to 156 (KSLDMEKSKDEA) show a composition bias toward basic and acidic residues. Glycyl lysine isopeptide (Lys-Gly) (interchain with G-Cter in SUMO2) cross-links involve residues Lys151 and Lys153. Phosphothreonine is present on Thr251. The interval 298–571 (LPNHMSSSVN…FMSSHIKSVH (274 aa)) is interaction with CBFA2T3. Residues 332–365 (IIDDDDDIISSSPDSAVSNTSLVPQADNSKSTTL) are disordered. Polar residues predominate over residues 347–365 (AVSNTSLVPQADNSKSTTL). Glycyl lysine isopeptide (Lys-Gly) (interchain with G-Cter in SUMO2) cross-links involve residues Lys388, Lys405, Lys412, and Lys447. Basic and acidic residues predominate over residues 451 to 461 (DGGEAKLDNEL). The interval 451-474 (DGGEAKLDNELPKTSGSEPPNKRM) is disordered. Residues 452–671 (GGEAKLDNEL…EFEFIIPESY (220 aa)) form an interaction with CTNND1 region. Residues Lys463, Lys472, and Lys477 each participate in a glycyl lysine isopeptide (Lys-Gly) (interchain with G-Cter in SUMO2) cross-link. A Nuclear localization signal motif is present at residues 469 to 478 (PPNKRMKVKH). C2H2-type zinc fingers lie at residues 492-514 (YICIVCKRSYVCLTSLRRHFNIH), 520-542 (YQCRYCDKVFPLAEYRTKHEIHH), and 548-571 (YQCLTCGKSFINYQFMSSHIKSVH). A required for DNA-binding region spans residues 512–637 (NIHSWEKKYQ…TSTPPQNKST (126 aa)). Glycyl lysine isopeptide (Lys-Gly) (interchain with G-Cter in SUMO2) cross-links involve residues Lys537, Lys568, Lys580, Lys609, and Lys616.

Interacts with NCOR1. Self-associates. Interacts with CTNND1, and this interaction inhibits binding to both methylated and non-methylated DNA. Interacts with CTNND2. Interacts with KPNA2/RCH1, which may mediate nuclear import of this protein. Interacts with CBFA2T3. In terms of tissue distribution, expressed in brain, heart, kidney, liver, lung, neuromuscular junctions, skeletal muscle, spleen and testis.

The protein localises to the nucleus. Its function is as follows. Transcriptional regulator with bimodal DNA-binding specificity. Binds to methylated CpG dinucleotides in the consensus sequence 5'-CGCG-3' and also binds to the non-methylated consensus sequence 5'-CTGCNA-3' also known as the consensus kaiso binding site (KBS). May recruit the N-CoR repressor complex to promote histone deacetylation and the formation of repressive chromatin structures in target gene promoters. Contributes to the repression of target genes of the Wnt signaling pathway. May also activate transcription of a subset of target genes by the recruitment of CTNND2. Represses expression of MMP7 in conjunction with transcriptional corepressors CBFA2T3, CBFA2T2 and RUNX1T1. This chain is Transcriptional regulator Kaiso (Zbtb33), found in Mus musculus (Mouse).